A 344-amino-acid chain; its full sequence is Lipase chaperone (344 aa).

The helical transmembrane segment at 14–34 (VAVYGAVGLAAIAGVAIWSGA) threads the bilayer.

The protein belongs to the lipase chaperone family.

It localises to the cell inner membrane. Functionally, may be involved in the folding of the extracellular lipase during its passage through the periplasm. This chain is Lipase chaperone, found in Burkholderia ambifaria (strain MC40-6).